The sequence spans 590 residues: Glutathione S-transferase T3 (590 aa).

Residues 1–82 (MKLKVYADRM…YLSSAYPSVV (82 aa)) form the GST N-terminal domain. Residues 11-12 (SQ), 40-41 (QL), 53-54 (KV), and 66-67 (ES) each bind glutathione. In terms of domain architecture, GST C-terminal spans 89–232 (DLSKRARIHS…KDRCQKQREM (144 aa)). In terms of domain architecture, Myb-like spans 265–336 (DRRKHRRKWS…HCKQRWSKLN (72 aa)). Positions 402-427 (SKGGGSSKRTKLNNGDRVYSSSSNPE) are disordered.

This sequence belongs to the GST superfamily. Theta family.

Its subcellular location is the nucleus. It catalyses the reaction RX + glutathione = an S-substituted glutathione + a halide anion + H(+). Its function is as follows. May be involved in the conjugation of reduced glutathione to a wide number of exogenous and endogenous hydrophobic electrophiles and have a detoxification role against certain herbicides. This chain is Glutathione S-transferase T3 (GSTT3), found in Arabidopsis thaliana (Mouse-ear cress).